The following is a 223-amino-acid chain: SCMKAAPMKEISIRGQGSLAYPGLQTQGNLDTLSGPNDATRGLTSLADTFEHVIEELLDEQQVIQPSKENKDADLYSSRVMLSSQVPLEPPLLFLLEEYKNYLDAANMSMRVRRHSDPARRGELSVCDSTSEWVTAAEKKTAVDMSGATVTVLEKVPVPKGQLKQYFYETKCSTKGYAKEGCRGIDKRYWNSQCRTTQSYVRALTMDNKKRVGWRFIRIDTSC.

The first 5 residues, 1–5 (SCMKA), serve as a signal peptide directing secretion. The propeptide occupies 6–114 (APMKEISIRG…AANMSMRVRR (109 aa)). Asparagine 107 is a glycosylation site (N-linked (GlcNAc...) asparagine). Disulfide bonds link cysteine 127-cysteine 194 and cysteine 172-cysteine 223.

This sequence belongs to the NGF-beta family.

It is found in the secreted. Promotes the survival of neuronal populations that are all located either in the central nervous system or directly connected to it. The polypeptide is Neurotrophic factor BDNF precursor form (BDNF) (Acrochordus javanicus (Javan wart snake)).